A 466-amino-acid polypeptide reads, in one-letter code: Cysteine--tRNA ligase (466 aa).

Residue C29 participates in Zn(2+) binding. The 'HIGH' region signature appears at P31–N41. C209, H234, and E238 together coordinate Zn(2+). A 'KMSKS' region motif is present at residues K266–S270. Residue K269 participates in ATP binding. S270 is subject to Phosphoserine.

This sequence belongs to the class-I aminoacyl-tRNA synthetase family. Monomer. Requires Zn(2+) as cofactor.

The protein resides in the cytoplasm. It carries out the reaction tRNA(Cys) + L-cysteine + ATP = L-cysteinyl-tRNA(Cys) + AMP + diphosphate. This chain is Cysteine--tRNA ligase, found in Bacillus velezensis (strain DSM 23117 / BGSC 10A6 / LMG 26770 / FZB42) (Bacillus amyloliquefaciens subsp. plantarum).